Here is a 352-residue protein sequence, read N- to C-terminus: B1 bradykinin receptor (352 aa).

At 1 to 41 (MASWPPLELQSSNQSQLFPQNATACDNAPEAWDLLHRVLPT) the chain is on the extracellular side. N-linked (GlcNAc...) asparagine glycosylation is found at N13 and N21. The helical transmembrane segment at 42–62 (FIISICSFGLLGNLFVLLVFL) threads the bilayer. The Cytoplasmic portion of the chain corresponds to 63-72 (LPRRRLNVAE). Residues 73-93 (IYLANLAASDLVFVLGLPFWA) traverse the membrane as a helical segment. Residues 94–110 (ENIWNQFNWPFGALLCR) lie on the Extracellular side of the membrane. An intrachain disulfide couples C109 to C188. A helical membrane pass occupies residues 111–131 (GINGVIKANLFISIFLVVAIS). Residues 132–153 (QDRYCLLVHPMASRRRQRRRQA) are Cytoplasmic-facing. The helical transmembrane segment at 154 to 174 (RVTCVLIWVVGGLLSIPTFLL) threads the bilayer. Topologically, residues 175-206 (RSIQAVPDLNITACILLLPHEAWHFARIVELN) are extracellular. Residue N184 is glycosylated (N-linked (GlcNAc...) asparagine). Residues 207 to 227 (ILAFLLPLAAIVFFNYHILAS) traverse the membrane as a helical segment. Residues 228–250 (LRGREEVSRTRCGGRKDSKTTAL) are Cytoplasmic-facing. A helical transmembrane segment spans residues 251–271 (ILTLVVAFLVCWAPYHFFAFL). Over 272–294 (EFLFQVQAIRSCFWEDFIDLGLQ) the chain is Extracellular. A helical transmembrane segment spans residues 295–315 (LANFLAFTNSSLNPVIYVFVG). Topologically, residues 316 to 352 (RLFRTKVWELYKQCTPKSLAPISSSHRKEIFQLFWRN) are cytoplasmic. C329 is lipidated: S-palmitoyl cysteine.

It belongs to the G-protein coupled receptor 1 family. Bradykinin receptor subfamily. BDKRB1 sub-subfamily.

It is found in the cell membrane. Its function is as follows. This is a receptor for bradykinin. Could be a factor in chronic pain and inflammation. In Chlorocebus pygerythrus (Vervet monkey), this protein is B1 bradykinin receptor (BDKRB1).